Consider the following 1232-residue polypeptide: DNA-directed RNA polymerase subunit beta (1232 aa).

The segment at 1170 to 1232 (SVDEDADELE…LDLDDFGDEH (63 aa)) is disordered. The span at 1171-1180 (VDEDADELEV) shows a compositional bias: acidic residues. Residues 1189–1198 (PEEKEEKEKE) are compositionally biased toward basic and acidic residues. Positions 1199 to 1232 (DSDEYDDLREEDVEPDLEELSLDDLDLDDFGDEH) are enriched in acidic residues.

It belongs to the RNA polymerase beta chain family. In terms of assembly, the RNAP catalytic core consists of 2 alpha, 1 beta, 1 beta' and 1 omega subunit. When a sigma factor is associated with the core the holoenzyme is formed, which can initiate transcription.

It carries out the reaction RNA(n) + a ribonucleoside 5'-triphosphate = RNA(n+1) + diphosphate. Its function is as follows. DNA-dependent RNA polymerase catalyzes the transcription of DNA into RNA using the four ribonucleoside triphosphates as substrates. This chain is DNA-directed RNA polymerase subunit beta, found in Clostridium botulinum (strain Okra / Type B1).